Consider the following 111-residue polypeptide: Putative single-stranded DNA-binding protein ycf41 (111 aa).

An SSB domain is found at 1–98; sequence MNSCTLLVQI…FSTSRIFKYK (98 aa).

The protein localises to the plastid. It is found in the chloroplast. This chain is Putative single-stranded DNA-binding protein ycf41 (ycf41), found in Pyropia yezoensis (Susabi-nori).